The sequence spans 282 residues: D-alanine aminotransferase (282 aa).

Tyrosine 32 contributes to the substrate binding site. Position 51 (arginine 51) interacts with pyridoxal 5'-phosphate. Arginine 99 and histidine 101 together coordinate substrate. Lysine 146 acts as the Proton acceptor in catalysis. N6-(pyridoxal phosphate)lysine is present on lysine 146. A pyridoxal 5'-phosphate-binding site is contributed by glutamate 178.

The protein belongs to the class-IV pyridoxal-phosphate-dependent aminotransferase family. In terms of assembly, homodimer. Requires pyridoxal 5'-phosphate as cofactor.

The catalysed reaction is D-alanine + 2-oxoglutarate = D-glutamate + pyruvate. Its function is as follows. Acts on the D-isomers of alanine, leucine, aspartate, glutamate, aminobutyrate, norvaline and asparagine. The enzyme transfers an amino group from a substrate D-amino acid to the pyridoxal phosphate cofactor to form pyridoxamine and an alpha-keto acid in the first half-reaction. The second half-reaction is the reverse of the first, transferring the amino group from the pyridoxamine to a second alpha-keto acid to form the product D-amino acid via a ping-pong mechanism. This is an important process in the formation of D-alanine and D-glutamate, which are essential bacterial cell wall components. The chain is D-alanine aminotransferase (dat) from Staphylococcus haemolyticus.